The sequence spans 504 residues: Maturase K (504 aa).

This sequence belongs to the intron maturase 2 family. MatK subfamily.

The protein resides in the plastid. It localises to the chloroplast. Usually encoded in the trnK tRNA gene intron. Probably assists in splicing its own and other chloroplast group II introns. This Barbarea vulgaris (Yellow rocket) protein is Maturase K.